We begin with the raw amino-acid sequence, 213 residues long: Uridine kinase (213 aa).

15 to 22 is a binding site for ATP; that stretch reads GASASGKS.

Belongs to the uridine kinase family.

The protein localises to the cytoplasm. The catalysed reaction is uridine + ATP = UMP + ADP + H(+). It catalyses the reaction cytidine + ATP = CMP + ADP + H(+). It participates in pyrimidine metabolism; CTP biosynthesis via salvage pathway; CTP from cytidine: step 1/3. Its pathway is pyrimidine metabolism; UMP biosynthesis via salvage pathway; UMP from uridine: step 1/1. This chain is Uridine kinase, found in Klebsiella pneumoniae (strain 342).